Consider the following 124-residue polypeptide: Ribonuclease P protein component (124 aa).

The protein belongs to the RnpA family. As to quaternary structure, consists of a catalytic RNA component (M1 or rnpB) and a protein subunit.

It catalyses the reaction Endonucleolytic cleavage of RNA, removing 5'-extranucleotides from tRNA precursor.. RNaseP catalyzes the removal of the 5'-leader sequence from pre-tRNA to produce the mature 5'-terminus. It can also cleave other RNA substrates such as 4.5S RNA. The protein component plays an auxiliary but essential role in vivo by binding to the 5'-leader sequence and broadening the substrate specificity of the ribozyme. The polypeptide is Ribonuclease P protein component (Synechocystis sp. (strain ATCC 27184 / PCC 6803 / Kazusa)).